The primary structure comprises 140 residues: MADDLVDGLTRAGLPGAKATARYVHTSPTKARRVVDLVRGRSASEALDILRFAPQAASTDVYKVVASAVANAENNHNLDPATLWIGAAYVDEGPTLKRIRPRAQGRAYRIRKRTSHITVVVESREPVSTGAGARTTRRAR.

This sequence belongs to the universal ribosomal protein uL22 family. In terms of assembly, part of the 50S ribosomal subunit.

This protein binds specifically to 23S rRNA; its binding is stimulated by other ribosomal proteins, e.g. L4, L17, and L20. It is important during the early stages of 50S assembly. It makes multiple contacts with different domains of the 23S rRNA in the assembled 50S subunit and ribosome. Its function is as follows. The globular domain of the protein is located near the polypeptide exit tunnel on the outside of the subunit, while an extended beta-hairpin is found that lines the wall of the exit tunnel in the center of the 70S ribosome. The sequence is that of Large ribosomal subunit protein uL22 from Parafrankia sp. (strain EAN1pec).